The chain runs to 330 residues: Lysophospholipase D GDPD3 (330 aa).

Position 1 (Met1) is a topological domain, cytoplasmic. A helical membrane pass occupies residues 2 to 22 (IPLLYFVLPTLGSYVMLSIFF). At 23 to 200 (LRRPHLLHTP…ANPEMPMAFT (178 aa)) the chain is on the extracellular side. The region spanning 39–308 (IRLAAHRGGS…DYPTALRHYL (270 aa)) is the GP-PDE domain. Positions 71, 73, and 86 each coordinate a divalent metal cation. The helical transmembrane segment at 201-221 (IWRSFWILLLYYLGLLPFVSI) threads the bilayer. Topologically, residues 222–330 (PEKFFFCFLP…EALSCLSLKK (109 aa)) are cytoplasmic. Residues 311 to 330 (QEEETQPPQPEALSCLSLKK) are disordered.

It belongs to the glycerophosphoryl diester phosphodiesterase family. Highly expressed in stomach and kidney. In stomach detected in the glandular epithelium. Predominantly expressed in the stomach (at protein level).

The protein resides in the membrane. It is found in the cytoplasm. It localises to the perinuclear region. Its subcellular location is the endoplasmic reticulum membrane. The enzyme catalyses 1-hexadecanoyl-sn-glycero-3-phosphocholine + H2O = 1-hexadecanoyl-sn-glycero-3-phosphate + choline + H(+). It catalyses the reaction 1-O-hexadecyl-sn-glycero-3-phosphocholine + H2O = 1-O-hexadecyl-sn-glycero-3-phosphate + choline + H(+). The catalysed reaction is 1-O-(1Z-octadecenyl)-sn-glycero-3-phospho-N-hexadecanoyl-ethanolamine + H2O = 1-O-(1Z-octadecenyl)-sn-glycero-3-phosphate + N-hexadecanoylethanolamine + H(+). It carries out the reaction N-(5Z,8Z,11Z,14Z-eicosatetraenoyl)-1-(9Z-octadecenoyl)-sn-glycero-3-phosphoethanolamine + H2O = N-(5Z,8Z,11Z,14Z-eicosatetraenoyl)-ethanolamine + 1-(9Z-octadecenoyl)-sn-glycero-3-phosphate + H(+). The enzyme catalyses N,1-di-(9Z-octadecenoyl)-sn-glycero-3-phosphoethanolamine + H2O = N-(9Z-octadecenoyl) ethanolamine + 1-(9Z-octadecenoyl)-sn-glycero-3-phosphate + H(+). It catalyses the reaction N-hexadecanoyl-1-(9Z-octadecenoyl)-sn-glycero-3-phosphoethanolamine + H2O = N-hexadecanoylethanolamine + 1-(9Z-octadecenoyl)-sn-glycero-3-phosphate + H(+). The catalysed reaction is 1-hexadecanoyl-sn-glycero-3-phosphocholine + H2O = sn-glycerol 3-phosphocholine + hexadecanoate + H(+). With respect to regulation, lysophospholipase D activity is stimulated by calcium. Loss of lysophospholipase D activity in presence of EDTA. Functionally, hydrolyzes lysoglycerophospholipids to produce lysophosphatidic acid (LPA) and the corresponding amines. Shows a preference for 1-O-alkyl-sn-glycero-3-phosphocholine (lyso-PAF), lysophosphatidylcholine (lyso-PC) and N-acylethanolamine lysophospholipids. Does not display glycerophosphodiester phosphodiesterase activity, since it cannot hydrolyze either glycerophosphoinositol or glycerophosphocholine. In Mus musculus (Mouse), this protein is Lysophospholipase D GDPD3.